The primary structure comprises 249 residues: MKVHRIVFLTVLTFFLTACDVDLYRSLPEDEANQMLALLMQHHIDAEKKQEEDGVTLRVEQSQFINAVELLRLNGYPHRQFTTADKMFPANQLVVSPQEEQQKINFLKEQRIEGMLSQMEGVINAKVTIALPTYDEGSNASPSSVAVFIKYSPQVNMEAFRVKIKDLIEMSIPGLQYSKISILMQPAEFRMVADVPARQTFWIMDVINANKGKVVKWLMKYPYPLMLSLTGLLLGVGILIGYFCLRRRF.

The signal sequence occupies residues 1 to 18 (MKVHRIVFLTVLTFFLTA). C19 is lipidated: N-palmitoyl cysteine. Residue C19 is the site of S-diacylglycerol cysteine attachment. The helical transmembrane segment at 225-245 (LMLSLTGLLLGVGILIGYFCL) threads the bilayer.

Belongs to the YscJ lipoprotein family.

It localises to the cell outer membrane. Its function is as follows. Component of Salmonella pathogenicity island 2 (SPI-2) type III secretion system, required for secretion of some type III-secreted effectors including the SpvB exotoxin. This Salmonella typhimurium (strain 14028s / SGSC 2262) protein is Secretion system apparatus lipoprotein SsaJ (ssaJ).